We begin with the raw amino-acid sequence, 473 residues long: Pre-mRNA-splicing factor PRP46 (473 aa).

Residues 1–14 (MSTSLETPSGTSAG) show a composition bias toward polar residues. Disordered stretches follow at residues 1–21 (MSTS…VASG) and 103–126 (GPNV…QAVA). WD repeat units follow at residues 180–219 (GHMG…LKLS), 222–261 (GHIS…VIRH), 264–303 (GHFS…NIFT), 306–347 (GHTS…NTLT), 349–388 (HKKS…FVNN), 391–429 (GHEA…PFQH), and 440–473 (DAEA…SEQA).

It belongs to the WD repeat PRL1/PRL2 family. In terms of assembly, associated with the spliceosome.

It localises to the cytoplasm. The protein resides in the nucleus. Its function is as follows. Involved in pre-mRNA splicing and required for cell cycle progression at G2/M. The protein is Pre-mRNA-splicing factor PRP46 (PRP46) of Cryptococcus neoformans var. neoformans serotype D (strain B-3501A) (Filobasidiella neoformans).